Consider the following 269-residue polypeptide: Endo-1,3-1,4-beta-glycanase ExoK (269 aa).

An N-terminal signal peptide occupies residues 1 to 29 (MTIDRYRRFARLAFIATLPLAGLATAAAA). The 213-residue stretch at 40–252 (DDFDTLDTRV…RVAFTAAGDE (213 aa)) folds into the GH16 domain. Residue glutamate 138 is the Nucleophile of the active site. Residue glutamate 142 is the Proton donor of the active site.

This sequence belongs to the glycosyl hydrolase 16 family.

It is found in the secreted. Its pathway is glycan metabolism; exopolysaccharide biosynthesis. Functionally, cleaves high molecular weight succinoglycan to yield LMW succinoglycan. Dynamically regulates the molecular weight distribution of succinoglycan by cleaving nascent succinoglycan only during a limited period after its synthesis, perhaps before it undergoes a time-dependent change in its conformation or aggregation state. This Rhizobium meliloti (strain 1021) (Ensifer meliloti) protein is Endo-1,3-1,4-beta-glycanase ExoK (exoK).